The following is a 296-amino-acid chain: 4-hydroxy-tetrahydrodipicolinate synthase (296 aa).

Thr50 is a pyruvate binding site. The active-site Proton donor/acceptor is the Tyr138. The active-site Schiff-base intermediate with substrate is Lys166. Residue Ile208 coordinates pyruvate.

The protein belongs to the DapA family. As to quaternary structure, homotetramer; dimer of dimers.

It is found in the cytoplasm. It catalyses the reaction L-aspartate 4-semialdehyde + pyruvate = (2S,4S)-4-hydroxy-2,3,4,5-tetrahydrodipicolinate + H2O + H(+). It functions in the pathway amino-acid biosynthesis; L-lysine biosynthesis via DAP pathway; (S)-tetrahydrodipicolinate from L-aspartate: step 3/4. Its function is as follows. Catalyzes the condensation of (S)-aspartate-beta-semialdehyde [(S)-ASA] and pyruvate to 4-hydroxy-tetrahydrodipicolinate (HTPA). This chain is 4-hydroxy-tetrahydrodipicolinate synthase, found in Ruthia magnifica subsp. Calyptogena magnifica.